We begin with the raw amino-acid sequence, 320 residues long: Protein TsetseEP (320 aa).

The N-terminal stretch at 1–19 (MKFFISFAFLCLVLSCVAA) is a signal peptide. Residues 192 to 320 (GLPEPEPEPE…ESKPNSLFNF (129 aa)) are disordered. Acidic residues predominate over residues 194–308 (PEPEPEPEPE…EPEPEPEPQP (115 aa)). Positions 194–311 (PEPEPEPEPE…PEPEPQPEPE (118 aa)) are 59 X 2 AA tandem repeats of P-E.

As to expression, expressed in the gut, but not salivary glands, of female and male flies (at protein level). Present in vesicles in midgut cells and in the lumen of the gut.

The protein resides in the secreted. The sequence is that of Protein TsetseEP from Glossina morsitans morsitans (Savannah tsetse fly).